We begin with the raw amino-acid sequence, 392 residues long: Chaperone protein DnaJ (392 aa).

Residues Asp2–Gly67 form the J domain. A CR-type zinc finger spans residues Gly148–Lys226. Zn(2+) contacts are provided by Cys161, Cys164, Cys178, Cys181, Cys200, Cys203, Cys214, and Cys217. 4 CXXCXGXG motif repeats span residues Cys161–Gly168, Cys178–Gly185, Cys200–Gly207, and Cys214–Gly221.

The protein belongs to the DnaJ family. In terms of assembly, homodimer. It depends on Zn(2+) as a cofactor.

Its subcellular location is the cytoplasm. Participates actively in the response to hyperosmotic and heat shock by preventing the aggregation of stress-denatured proteins and by disaggregating proteins, also in an autonomous, DnaK-independent fashion. Unfolded proteins bind initially to DnaJ; upon interaction with the DnaJ-bound protein, DnaK hydrolyzes its bound ATP, resulting in the formation of a stable complex. GrpE releases ADP from DnaK; ATP binding to DnaK triggers the release of the substrate protein, thus completing the reaction cycle. Several rounds of ATP-dependent interactions between DnaJ, DnaK and GrpE are required for fully efficient folding. Also involved, together with DnaK and GrpE, in the DNA replication of plasmids through activation of initiation proteins. The polypeptide is Chaperone protein DnaJ (Chlamydia pneumoniae (Chlamydophila pneumoniae)).